The primary structure comprises 970 residues: Sodium/calcium exchanger 1 (970 aa).

The N-terminal stretch at 1–32 is a signal peptide; the sequence is MLRLSLSPTYSLGFHLLAMMTLLISHVDHITA. Over 33–71 the chain is Extracellular; sequence ETEMVEEGNETGECTGSYYCKKGVILPIWEPQDPSFGDK. Asn-41 carries N-linked (GlcNAc...) asparagine glycosylation. A helical membrane pass occupies residues 72 to 92; that stretch reads IARATVYFVAMVYMFLGVSII. Topologically, residues 93 to 133 are cytoplasmic; sequence ADRFMSSIEVITSQEKEITIKKPNGETTKTTVRIWNETVSN. A helical transmembrane segment spans residues 134–154; it reads LTLMALGSSAPEILLSVIEVC. One copy of the Alpha-1 repeat lies at 138–178; sequence ALGSSAPEILLSVIEVCGHNFTAGDLGPSTIVGSAAFNMFI. Residues 155-167 lie on the Extracellular side of the membrane; that stretch reads GHNFTAGDLGPST. Residue Asn-157 is glycosylated (N-linked (GlcNAc...) asparagine). Residues 168-188 form a helical membrane-spanning segment; that stretch reads IVGSAAFNMFIIIALCVYVVP. The Cytoplasmic portion of the chain corresponds to 189-201; sequence DGETRKIKHLRVF. A helical transmembrane segment spans residues 202–222; it reads FVTAAWSIFAYTWLYIILSVI. The Extracellular portion of the chain corresponds to 223–228; that stretch reads SPGVVE. A helical membrane pass occupies residues 229–249; it reads VWEGLLTFFFFPICVVFAWVA. Over 250-797 the chain is Cytoplasmic; sequence DRRLLFYKYV…FVPPTEYWNG (548 aa). Residues 251-270 are putative calmodulin-binding region; that stretch reads RRLLFYKYVYKRYRAGKQRG. Residues Ser-282 and Ser-389 each carry the phosphoserine modification. Calx-beta domains lie at 393–493 and 524–624; these read VNTE…VHLS and ATVT…LEIG. 16 residues coordinate Ca(2+): Glu-417, Asp-453, Asp-478, Asp-479, Ile-481, Glu-483, Glu-486, Asp-530, Asp-531, Asp-532, Glu-548, Asp-584, Asp-610, Glu-611, Glu-612, and Glu-715. Residues 798-818 traverse the membrane as a helical segment; the sequence is WACFIVSILMIGLLTAFIGDL. Residues 819–821 are Extracellular-facing; that stretch reads ASH. A helical transmembrane segment spans residues 822-842; the sequence is FGCTIGLKDSVTAVVFVALGT. The Alpha-2 repeat unit spans residues 839–875; that stretch reads ALGTSVPDTFASKVAATQDQYADASIGNVTGSNAVNV. Over 843–871 the chain is Cytoplasmic; the sequence is SVPDTFASKVAATQDQYADASIGNVTGSN. A helical membrane pass occupies residues 872 to 892; it reads AVNVFLGIGVAWSIAAIYHAA. The Extracellular segment spans residues 893 to 903; it reads NGEQFKVSPGT. A helical transmembrane segment spans residues 904 to 924; sequence LAFSVTLFTIFAFINVGVLLY. At 925–941 the chain is on the cytoplasmic side; sequence RRRPEIGGELGGPRTAK. A helical membrane pass occupies residues 942 to 962; sequence LLTSCLFVLLWLLYIFFSSLE. At 963 to 970 the chain is on the extracellular side; it reads AYCHIKGF.

The protein belongs to the Ca(2+):cation antiporter (CaCA) (TC 2.A.19) family. SLC8 subfamily.

It is found in the cell membrane. It catalyses the reaction Ca(2+)(in) + 3 Na(+)(out) = Ca(2+)(out) + 3 Na(+)(in). Activated by micromolar levels of Ca(2+). Mediates the exchange of one Ca(2+) ion against three to four Na(+) ions across the cell membrane, and thereby contributes to the regulation of cytoplasmic Ca(2+) levels and Ca(2+)-dependent cellular processes. Contributes to Ca(2+) transport during excitation-contraction coupling in muscle. In a first phase, voltage-gated channels mediate the rapid increase of cytoplasmic Ca(2+) levels due to release of Ca(2+) stores from the endoplasmic reticulum. SLC8A1 mediates the export of Ca(2+) from the cell during the next phase, so that cytoplasmic Ca(2+) levels rapidly return to baseline. Required for normal embryonic heart development and the onset of heart contractions. This chain is Sodium/calcium exchanger 1 (SLC8A1), found in Cavia porcellus (Guinea pig).